Consider the following 88-residue polypeptide: Outer membrane protein H.8 (88 aa).

The signal sequence occupies residues 1–17 (MKKSLFAAALLSLALAA). A lipid anchor (N-palmitoyl cysteine) is attached at Cys18. A lipid anchor (S-diacylglycerol cysteine) is attached at Cys18. Tandem repeats lie at residues 23-27 (AAEAP), 28-32 (AAEAS), 33-37 (STEAP), 38-42 (AAEAP), 43-47 (AAEAP), 48-52 (AAEAA), 53-57 (AAEAP), 58-62 (AAEAP), 63-67 (AAEAP), 68-72 (AAEAA), 73-77 (ATEAP), 78-82 (AAEAP), and 83-87 (AAEAA). Residues 23–87 (AAEAPAAEAS…AAEAPAAEAA (65 aa)) are 13 X 5 AA tandem repeats of [AS]-[AT]-E-A-[PAS]. Residues 23-88 (AAEAPAAEAS…AEAPAAEAAK (66 aa)) form a disordered region. Residues 25–88 (EAPAAEASST…AEAPAAEAAK (64 aa)) are compositionally biased toward low complexity.

It localises to the cell outer membrane. The protein is Outer membrane protein H.8 of Neisseria gonorrhoeae (strain ATCC 700825 / FA 1090).